Reading from the N-terminus, the 245-residue chain is Adapter protein MecA (245 aa).

Belongs to the MecA family. Homodimer.

In terms of biological role, enables the recognition and targeting of unfolded and aggregated proteins to the ClpC protease or to other proteins involved in proteolysis. The sequence is that of Adapter protein MecA from Streptococcus pneumoniae serotype 4 (strain ATCC BAA-334 / TIGR4).